The chain runs to 484 residues: Malonate-semialdehyde dehydrogenase 1 (484 aa).

Residues phenylalanine 153, lysine 177, glutamate 180, arginine 181, serine 230, and threonine 252 each contribute to the NAD(+) site. Cysteine 285 acts as the Nucleophile in catalysis. Glutamate 385 lines the NAD(+) pocket.

The protein belongs to the aldehyde dehydrogenase family. IolA subfamily. In terms of assembly, homotetramer.

It catalyses the reaction 3-oxopropanoate + NAD(+) + CoA + H2O = hydrogencarbonate + acetyl-CoA + NADH + H(+). The catalysed reaction is 2-methyl-3-oxopropanoate + NAD(+) + CoA + H2O = propanoyl-CoA + hydrogencarbonate + NADH + H(+). Its pathway is polyol metabolism; myo-inositol degradation into acetyl-CoA; acetyl-CoA from myo-inositol: step 7/7. Catalyzes the oxidation of malonate semialdehyde (MSA) and methylmalonate semialdehyde (MMSA) into acetyl-CoA and propanoyl-CoA, respectively. Is involved in a myo-inositol catabolic pathway. Bicarbonate, and not CO2, is the end-product of the enzymatic reaction. The chain is Malonate-semialdehyde dehydrogenase 1 from Geobacillus thermodenitrificans (strain NG80-2).